The primary structure comprises 833 residues: Leucine--tRNA ligase (833 aa).

Residues Pro-41–His-52 carry the 'HIGH' region motif. The 'KMSKS' region signature appears at Lys-610–Ser-614. Residue Lys-613 participates in ATP binding.

This sequence belongs to the class-I aminoacyl-tRNA synthetase family.

It localises to the cytoplasm. The enzyme catalyses tRNA(Leu) + L-leucine + ATP = L-leucyl-tRNA(Leu) + AMP + diphosphate. The polypeptide is Leucine--tRNA ligase (Streptococcus pyogenes serotype M18 (strain MGAS8232)).